A 138-amino-acid chain; its full sequence is Membrane protein P8A7 (138 aa).

The next 4 membrane-spanning stretches (helical) occupy residues 12–30 (ILVILAGCFITACGIYLFV), 32–56 (GLFHSIIGFVLGIYYLLAGVCIVLL), 71–90 (YTYWFGKGALISLIGLLILG), and 93–118 (GFFLAAGIIVIAVGIVCMIFHFLLGC).

It localises to the membrane. The polypeptide is Membrane protein P8A7 (pmpA) (Dictyostelium discoideum (Social amoeba)).